The sequence spans 598 residues: Arginine--tRNA ligase (598 aa).

Positions 131 to 141 match the 'HIGH' region motif; the sequence is ANPTGPMHVGH. A disordered region spans residues 288–309; that stretch reads KLPPPKSKKGQPPPQAQPDEEG.

This sequence belongs to the class-I aminoacyl-tRNA synthetase family. As to quaternary structure, monomer.

It is found in the cytoplasm. It carries out the reaction tRNA(Arg) + L-arginine + ATP = L-arginyl-tRNA(Arg) + AMP + diphosphate. This is Arginine--tRNA ligase from Anaeromyxobacter dehalogenans (strain 2CP-C).